Here is a 325-residue protein sequence, read N- to C-terminus: uncharacterized protein (325 aa).

2 stretches are compositionally biased toward polar residues: residues 1 to 21 (MSYQ…SSSA) and 29 to 57 (EPFS…SSRA). Residues 1–325 (MSYQQRANDS…LKTGHHSERY (325 aa)) form a disordered region. A compositionally biased stretch (basic and acidic residues) spans 86–109 (ESRKKEQSDVRGGDTSYSRRHDDS). Polar residues-rich tracts occupy residues 114 to 167 (NKYS…TTQG) and 174 to 193 (YSQS…TPSD). Low complexity-rich tracts occupy residues 200 to 210 (YDYSSSGSHTH) and 252 to 278 (ATDT…QRNA). The span at 282-325 (EDEHVSMGDKMKGNMEKMAGKLTRDPELVQKGEDLKTGHHSERY) shows a compositional bias: basic and acidic residues.

This is an uncharacterized protein from Schizosaccharomyces pombe (strain 972 / ATCC 24843) (Fission yeast).